We begin with the raw amino-acid sequence, 305 residues long: MIIDVNTPISSRLDKYLKRLYPLLTQGVIEKALRQKQITVNSQKAEASLRVKGGDKIFINDKFNLPVKQPEKLVFTDAEIKLAKKITTDYLIYEDDNLIAINKPAGLATQGGSKINLSIDSALKYLNYKGADFKLVHRLDKETSGLLLIAKNYLSNVKLHDAFKEKLVVKTYFAVTYGKPIKNVGEVRSNIEKSKGSTPKITDIYSENGKLAITYYKLLKSLDNNLFLIEFTPVTGRMHQLRLHAKLLGCPIVGDDKYGNKEIMPYSKYMFLHANNICLSEKIFGKEINLEAKLPFYFTDKFVEC.

One can recognise an S4 RNA-binding domain in the interval 11-70; the sequence is SRLDKYLKRLYPLLTQGVIEKALRQKQITVNSQKAEASLRVKGGDKIFINDKFNLPVKQP. D140 is a catalytic residue.

This sequence belongs to the pseudouridine synthase RluA family.

The enzyme catalyses uridine(955/2504/2580) in 23S rRNA = pseudouridine(955/2504/2580) in 23S rRNA. Responsible for synthesis of pseudouridine from uracil at positions 955, 2504 and 2580 in 23S ribosomal RNA. This Rickettsia felis (strain ATCC VR-1525 / URRWXCal2) (Rickettsia azadi) protein is Ribosomal large subunit pseudouridine synthase C (rluC).